We begin with the raw amino-acid sequence, 1221 residues long: 2-oxoglutarate dehydrogenase E1/E2 component (1221 aa).

The interval 2 to 40 (SSASTFGQNAWLVDEMFQQFQKDPKSVDKEWRELFEAQG) is 2-oxoglutarate dehydrogenase E1, N-terminal part. The disordered stretch occupies residues 22-107 (QKDPKSVDKE…KLPEPGQTPI (86 aa)). A compositionally biased stretch (basic and acidic residues) spans 23-36 (KDPKSVDKEWRELF). The segment covering 41–52 (GPNTTPATTEAQ) has biased composition (polar residues). The interval 41–89 (GPNTTPATTEAQPSAPKESAKPAPKAAPAAKAAPRVETKPADKTAPKAK) is linker. The segment covering 53–73 (PSAPKESAKPAPKAAPAAKAA) has biased composition (low complexity). The segment covering 74 to 90 (PRVETKPADKTAPKAKE) has biased composition (basic and acidic residues). Residues 90 to 337 (ESSVPQQPKL…LRTMSRLLTD (248 aa)) are succinyltransferase E2. Histidine 316 (proton acceptor; for succinyltransferase activity) is an active-site residue. The interval 338 to 1221 (DSFWDEIFDA…KQLIDEAFEA (884 aa)) is 2-oxoglutarate dehydrogenase E1, C-terminal part. Arginine 544 serves as a coordination point for thiamine diphosphate. The 2-oxoglutarate site is built by histidine 583 and serine 608. Residues serine 608, leucine 610, aspartate 645, alanine 646, alanine 647, and asparagine 678 each contribute to the thiamine diphosphate site. Residue aspartate 645 coordinates Mg(2+). Mg(2+)-binding residues include asparagine 678 and isoleucine 680. Histidine 1017 contributes to the 2-oxoglutarate binding site. Threonine 1035, arginine 1051, lysine 1087, serine 1090, and arginine 1144 together coordinate acetyl-CoA.

It in the N-terminal section; belongs to the alpha-ketoglutarate dehydrogenase family. The protein in the C-terminal section; belongs to the 2-oxoacid dehydrogenase family. Homodimer. Part of an unusual ODH/PDH supercomplex, consisting of AceE (E1), AceF (E2), and Lpd (E3) together with OdhA (E1+E2). Interacts with the FHA domain of unphosphorylated OdhI via its C-terminal dehydrogenase domain. It depends on Mg(2+) as a cofactor. Thiamine diphosphate is required as a cofactor.

The enzyme catalyses N(6)-[(R)-lipoyl]-L-lysyl-[protein] + 2-oxoglutarate + H(+) = N(6)-[(R)-S(8)-succinyldihydrolipoyl]-L-lysyl-[protein] + CO2. It carries out the reaction N(6)-[(R)-dihydrolipoyl]-L-lysyl-[protein] + succinyl-CoA = N(6)-[(R)-S(8)-succinyldihydrolipoyl]-L-lysyl-[protein] + CoA. It functions in the pathway carbohydrate metabolism; tricarboxylic acid cycle; succinyl-CoA from 2-oxoglutarate (dehydrogenase route): step 1/1. With respect to regulation, inhibited by unphosphorylated OdhI, but not by phosphorylated OdhI. Functionally, catalyzes the E1 and E2 reactions as part of 2-oxoglutarate dehydrogenase (ODH) activity, to convert 2-oxoglutarate to succinyl-CoA and CO(2). OdhA has reductase activity with 2-oxoglutarate but does not react with pyruvate, and also displays transsuccinylase but no transacetylase activity. Since OdhA is not lipoylated, the succinyltransferase activity of its E2 domain is dependent on lipoyl residues of the acetyltransferase AceF. This chain is 2-oxoglutarate dehydrogenase E1/E2 component, found in Corynebacterium glutamicum (strain ATCC 13032 / DSM 20300 / JCM 1318 / BCRC 11384 / CCUG 27702 / LMG 3730 / NBRC 12168 / NCIMB 10025 / NRRL B-2784 / 534).